Consider the following 296-residue polypeptide: NAD kinase (296 aa).

Asp74 serves as the catalytic Proton acceptor. Residues 74-75 (DG), 148-149 (ND), Arg176, Asp178, and 189-194 (TAYALS) each bind NAD(+).

This sequence belongs to the NAD kinase family. It depends on a divalent metal cation as a cofactor.

The protein localises to the cytoplasm. The enzyme catalyses NAD(+) + ATP = ADP + NADP(+) + H(+). Functionally, involved in the regulation of the intracellular balance of NAD and NADP, and is a key enzyme in the biosynthesis of NADP. Catalyzes specifically the phosphorylation on 2'-hydroxyl of the adenosine moiety of NAD to yield NADP. In Nitrosomonas europaea (strain ATCC 19718 / CIP 103999 / KCTC 2705 / NBRC 14298), this protein is NAD kinase.